Consider the following 266-residue polypeptide: Gas vesicle protein L (266 aa).

Belongs to the gas vesicle GvpF/GvpL family.

It is found in the gas vesicle. Functionally, might be involved in nucleating gas vesicle formation. A minor component of the gas vesicle. Gas vesicles are hollow, gas filled proteinaceous nanostructures found in some microorganisms. It is not clear what function gas vesicles perform in soil bacteria. This Streptomyces sp. (strain CB03234) protein is Gas vesicle protein L.